The primary structure comprises 599 residues: Vitamin B12-dependent ribonucleotide reductase (599 aa).

A substrate-binding site is contributed by 193-197 (PTGTI). A disordered region spans residues 519-555 (LAQSAPRQAGPAKAATTAPAAKAQEPAAAPSPKQAHN). Residues 526–553 (QAGPAKAATTAPAAKAQEPAAAPSPKQA) show a composition bias toward low complexity.

This sequence belongs to the ribonucleoside diphosphate reductase class-2 family. The cofactor is adenosylcob(III)alamin.

The catalysed reaction is a 2'-deoxyribonucleoside 5'-diphosphate + [thioredoxin]-disulfide + H2O = a ribonucleoside 5'-diphosphate + [thioredoxin]-dithiol. Its function is as follows. Catalyzes the reduction of ribonucleotides to deoxyribonucleotides. May function to provide a pool of deoxyribonucleotide precursors for DNA repair during oxygen limitation and/or for immediate growth after restoration of oxygen. This chain is Vitamin B12-dependent ribonucleotide reductase (nrdJ), found in Streptantibioticus cattleyicolor (Streptomyces cattleya).